A 585-amino-acid chain; its full sequence is Parathyroid hormone/parathyroid hormone-related peptide receptor (585 aa).

An N-terminal signal peptide occupies residues 1–26 (MGAARIAPGLALLLCCPVLSSAYALV). At 27-184 (DADDVMTKEE…REREVFDRLG (158 aa)) the chain is on the extracellular side. Intrachain disulfides connect Cys-48–Cys-113, Cys-104–Cys-144, and Cys-127–Cys-166. The segment at 66 to 100 (DKGWASAPTSGKPRKEKASGKLYPESGEDTGSRHQ) is disordered. N-linked (GlcNAc...) asparagine glycosylation is found at Asn-147, Asn-157, Asn-162, and Asn-172. The chain crosses the membrane as a helical span at residues 185-208 (MIYTVGYSVSLASLTVAVLILAYF). Topologically, residues 209 to 215 (RRLHCTR) are cytoplasmic. Residues 216–235 (NYIHMHLFLSFMLRAVSIFV) form a helical membrane-spanning segment. At 236–277 (KDAVLYSGATLDEAERLTEEELRAIAQAPLPPVAATSYVGCR) the chain is on the extracellular side. The helical transmembrane segment at 278 to 301 (VAVTFFLYFLATNYYWILVEGLYL) threads the bilayer. The Cytoplasmic segment spans residues 302-315 (HSLIFMAFFSEKKY). Residues 316–337 (LWGFTVFGWGLPAIFVAVWVSV) form a helical membrane-spanning segment. At 338 to 356 (RATLANTGCWDLSSGNKKW) the chain is on the extracellular side. A helical membrane pass occupies residues 357–377 (IIQVPILASIVLNFILFINIV). The Cytoplasmic segment spans residues 378-404 (RVLATKLRETNAGRCDTRQQYRKLLKS). The chain crosses the membrane as a helical span at residues 405 to 423 (TLVLMPLFGVHYIVFMATP). Residues 424–435 (YTEVSGTLWQVQ) lie on the Extracellular side of the membrane. A helical transmembrane segment spans residues 436–458 (MHYEMLFNSFQGFFVAIIYCFCN). Topologically, residues 459-585 (GEVQAEIKKS…LLQEEWETVM (127 aa)) are cytoplasmic. The short motif at 469 to 472 (WSRW) is the Important for interaction with G proteins element. Residue Thr-543 is modified to Phosphothreonine.

It belongs to the G-protein coupled receptor 2 family. Homodimer in the absence of bound ligand. Peptide hormone binding leads to dissociation of the homodimer. N-glycosylated.

The protein resides in the cell membrane. Its function is as follows. G-protein-coupled receptor for parathyroid hormone (PTH) and for parathyroid hormone-related peptide (PTHLH). Ligand binding causes a conformation change that triggers signaling via guanine nucleotide-binding proteins (G proteins) and modulates the activity of downstream effectors, such as adenylate cyclase (cAMP). PTH1R is coupled to G(s) G alpha proteins and mediates activation of adenylate cyclase activity. PTHLH dissociates from PTH1R more rapidly than PTH; as consequence, the cAMP response induced by PTHLH decays faster than the response induced by PTH. This Sus scrofa (Pig) protein is Parathyroid hormone/parathyroid hormone-related peptide receptor (PTH1R).